Consider the following 524-residue polypeptide: BEL1-like homeodomain protein 3 (524 aa).

Positions 171–187 (SRYLKPTQQLLDEVVSV) are SR/KY domain. 2 stretches are compositionally biased toward basic and acidic residues: residues 195-205 (NKKMKNDKGQD) and 216-235 (EDDK…ELQS). The disordered stretch occupies residues 195 to 236 (NKKMKNDKGQDFHNGSSDNITEDDKSQSQELSPSERQELQSK). Positions 229 to 300 (ERQELQSKKS…CLRDAIKEQI (72 aa)) are BELL domain. A DNA-binding region (homeobox) is located at residues 346–408 (AWRPQRGLPE…NARVRLWKPM (63 aa)). Residues 429–463 (QDTKKMQETSQLKHEDSSSSQQQNQGNNNNNIPYT) are disordered. Residues 430-445 (DTKKMQETSQLKHEDS) show a composition bias toward basic and acidic residues. The span at 446–459 (SSSQQQNQGNNNNN) shows a compositional bias: low complexity.

This sequence belongs to the TALE/BELL homeobox family. As to quaternary structure, may form heterodimeric complex with the TALE/KNOX protein STM. Interacts with OFP1, OFP2, OFP3, OFP4, OFP5 and OFP15.

Its subcellular location is the nucleus. Its function is as follows. Transcription factor that is responsive of the nuclear import of SHOOT MERISTEMLESS (STM). The chain is BEL1-like homeodomain protein 3 (BLH3) from Arabidopsis thaliana (Mouse-ear cress).